The sequence spans 381 residues: Creatine kinase M-type (381 aa).

Positions 11-98 (KLNYSAAEEF…FDPVIEDRHG (88 aa)) constitute a Phosphagen kinase N-terminal domain. Positions 125-367 (YVLSSRVRTG…KLMVEMEKRL (243 aa)) constitute a Phosphagen kinase C-terminal domain. Residues 128–132 (SSRVR), His-191, Arg-236, Arg-292, 320–325 (RGTGGV), and Asp-335 contribute to the ATP site.

Belongs to the ATP:guanido phosphotransferase family. In terms of assembly, dimer of identical or non-identical chains. With MM being the major form in skeletal muscle and myocardium, MB existing in myocardium, and BB existing in many tissues, especially brain.

The protein localises to the cytoplasm. It catalyses the reaction creatine + ATP = N-phosphocreatine + ADP + H(+). Reversibly catalyzes the transfer of phosphate between ATP and various phosphogens (e.g. creatine phosphate). Creatine kinase isoenzymes play a central role in energy transduction in tissues with large, fluctuating energy demands, such as skeletal muscle, heart, brain and spermatozoa. The sequence is that of Creatine kinase M-type from Torpedo marmorata (Marbled electric ray).